The chain runs to 227 residues: Ribose-5-phosphate isomerase A (227 aa).

Residues Thr-28–Thr-31, Asp-85–Asp-88, and Lys-98–Gly-101 each bind substrate. Glu-107 functions as the Proton acceptor in the catalytic mechanism. Lys-125 is a substrate binding site.

This sequence belongs to the ribose 5-phosphate isomerase family. In terms of assembly, homodimer.

It catalyses the reaction aldehydo-D-ribose 5-phosphate = D-ribulose 5-phosphate. Its pathway is carbohydrate degradation; pentose phosphate pathway; D-ribose 5-phosphate from D-ribulose 5-phosphate (non-oxidative stage): step 1/1. Catalyzes the reversible conversion of ribose-5-phosphate to ribulose 5-phosphate. This Limosilactobacillus reuteri (strain DSM 20016) (Lactobacillus reuteri) protein is Ribose-5-phosphate isomerase A.